The following is a 664-amino-acid chain: MATYKPKNILITGAAGFIASHVANRLVRSYPDYKIVVLDKLDYCSNLKNLNPSKSSPNFKFVKGDIASADLVNYLLITEEIDTIMHFAAQTHVDNSFGNSFEFTKNNIYGTHVLLEACKVTGQIRRFIHVSTDEVYGETDEDASVGNHEASQLLPTNPYSATKAGAEMLVMAYGRSYGLPVITTRGNNVYGPNQFPEKLIPKFILLAMNGKPLPIHGDGSNVRSYLYCEDVAEAFEVVLHKGEVNHVYNIGTTRERRVIDVANDISKLFGIDPDSTIQYVENRPFNDQRYFLDDQKLKKLGWCERTNWEEGLRKTMEWYTENPEWWGDVSGALLPHPRMLMMPGDRHSDGSDEHKNADGNQTFTVVTPTKAGCSGDKRSLKFLIYGKTGWLGGLLGKLCEKQGIPYEYGKGRLEDRASLIADIRSIKPSHVFNAAGLTGRPNVDWCESHKTETIRVNVAGTLTLADVCRENDLLMMNFATGCIFEYDAAHPEGSGIGFKEEDKPNFTGSFYSKTKAMVEELLREFDNVCTLRVRMPISSDLNNPRNFITKISRYNKVVNIPNSMTILDELLPISIEMAKRNLRGIWNFTNPGVVSHNEILEMYKSYIEPDFKWSNFNLEEQAKVIVAPRSNNEMDGAKLSKEFPEMLSIKDSLIKYVFEPNKRT.

13–19 (GAAGFIA) contacts NAD(+). Position 132 (T132) interacts with substrate. Residue D133 is the Proton donor of the active site. Residues E134 and Y159 each act as proton acceptor in the active site. 386 to 392 (GKTGWLG) is an NADP(+) binding site.

It in the N-terminal section; belongs to the NAD(P)-dependent epimerase/dehydratase family. dTDP-glucose dehydratase subfamily. This sequence in the C-terminal section; belongs to the dTDP-4-dehydrorhamnose reductase family. NAD(+) is required as a cofactor. It depends on NADP(+) as a cofactor. Expressed in roots, stems, seedlings, and siliques. Lower expression in inflorescence tips, and leaves.

It carries out the reaction UDP-alpha-D-glucose = UDP-4-dehydro-6-deoxy-alpha-D-glucose + H2O. It participates in carbohydrate biosynthesis. Trifunctional enzyme involved in UDP-beta-L-rhamnose biosynthesis, a precursor of the primary cell wall components rhamnogalacturonan I (RG-I) and rhamnogalacturonan II (RG-II). Catalyzes the dehydration of UDP-glucose to form UDP-4-dehydro-6-deoxy-D-glucose followed by the epimerization of the C3' and C5' positions of UDP-4-dehydro-6-deoxy-D-glucose to form UDP-4-keto-beta-L-rhamnose and the reduction of UDP-4-keto-beta-L-rhamnose to yield UDP-beta-L-rhamnose. This chain is Trifunctional UDP-glucose 4,6-dehydratase/UDP-4-keto-6-deoxy-D-glucose 3,5-epimerase/UDP-4-keto-L-rhamnose-reductase RHM3, found in Arabidopsis thaliana (Mouse-ear cress).